We begin with the raw amino-acid sequence, 1176 residues long: Condensin complex subunit 1 (1176 aa).

Ser464 and Ser475 each carry phosphoserine.

Belongs to the CND1 (condensin subunit 1) family. As to quaternary structure, component of the condensin complex, which contains the SMC2 and SMC4 heterodimer, and three non SMC subunits that probably regulate the complex: BRN1, YCS4 and YCG1/YCS5.

Its subcellular location is the nucleus. The protein localises to the chromosome. Regulatory subunit of the condensin complex, a complex required for conversion of interphase chromatin into mitotic-like condense chromosomes. The condensin complex probably introduces positive supercoils into relaxed DNA in the presence of type I topoisomerases and converts nicked DNA into positive knotted forms in the presence of type II topoisomerases. The condensin complex probably also plays a role during interphase. This chain is Condensin complex subunit 1 (YCS4), found in Saccharomyces cerevisiae (strain ATCC 204508 / S288c) (Baker's yeast).